A 283-amino-acid polypeptide reads, in one-letter code: 4-diphosphocytidyl-2-C-methyl-D-erythritol kinase (283 aa).

Lysine 10 is an active-site residue. Residue 99–109 participates in ATP binding; the sequence is PMGGGLGGGSS. Aspartate 141 is an active-site residue.

This sequence belongs to the GHMP kinase family. IspE subfamily. Homodimer.

The enzyme catalyses 4-CDP-2-C-methyl-D-erythritol + ATP = 4-CDP-2-C-methyl-D-erythritol 2-phosphate + ADP + H(+). The protein operates within isoprenoid biosynthesis; isopentenyl diphosphate biosynthesis via DXP pathway; isopentenyl diphosphate from 1-deoxy-D-xylulose 5-phosphate: step 3/6. Functionally, catalyzes the phosphorylation of the position 2 hydroxy group of 4-diphosphocytidyl-2C-methyl-D-erythritol. The polypeptide is 4-diphosphocytidyl-2-C-methyl-D-erythritol kinase (Escherichia coli O81 (strain ED1a)).